A 388-amino-acid polypeptide reads, in one-letter code: Cell adhesion molecule 4 (388 aa).

Residues M1–G20 form the signal peptide. One can recognise an Ig-like V-type domain in the interval P21–T119. Over P21 to A324 the chain is Extracellular. N31 and N67 each carry an N-linked (GlcNAc...) asparagine glycan. Cystine bridges form between C44/C104, C145/C199, and C245/C291. 2 Ig-like C2-type domains span residues P124–D219 and P224–V307. The N-linked (GlcNAc...) asparagine glycan is linked to N286. Residues I325 to V345 form a helical membrane-spanning segment. Over W346 to I388 the chain is Cytoplasmic. S361 bears the Phosphoserine mark.

It belongs to the nectin family. Monomer and homodimer. In terms of processing, N-glycosylated. Expressed in brain, prostate, brain, kidney and some other organs.

It localises to the membrane. Functionally, involved in the cell-cell adhesion. Has calcium- and magnesium-independent cell-cell adhesion activity. May have tumor-suppressor activity. The sequence is that of Cell adhesion molecule 4 (CADM4) from Homo sapiens (Human).